Reading from the N-terminus, the 442-residue chain is MSAAQGWDRNRRRGGGAAGGGGGGSGAGGGSGGNGGRGTGQLNRFVQLSGRPHLPGKKKIRWDPVRRRFIQSCPIIRIPNRFLRGHRPPPARSGHRCVADNTNLYVFGGYNPDYDESGGPDNEDYPLFRELWRYHFATGVWHQMGTDGYMPRELASMSLVLHGNNLLVFGGTGIPFGESNGNDVHVCNVKYKRWALLSCRGKKPSRIYGQAMAIINGSLYVFGGTTGYIYSTDLHKLDLNTREWTQLKPNNLSCDLPEERYRHEIAHDGQRIYILGGGTSWTAYSLNKIHAYNLETNAWEEIATKPHEKIGFPAARRCHSCVQIKNDVFICGGYNGEVILGDIWKLNLQTFQWVKLPATMPEPVYFHCAAVTPAGCMYIHGGVVNIHENKRTGSLFKIWLVVPSLLELAWEKLLAAFPNLANLSRTQLLHLGLTQGLIERLK.

A disordered region spans residues methionine 1–lysine 58. Arginine 13 is modified (omega-N-methylarginine). Positions glycine 15–threonine 39 are enriched in gly residues. Kelch repeat units follow at residues arginine 87–leucine 154, alanine 155–serine 198, cysteine 199–arginine 260, tyrosine 261–histidine 319, serine 320–valine 364, and tyrosine 365–proline 403. The interaction with CUL2 stretch occupies residues valine 401–lysine 442.

The protein belongs to the KLHDC10 family. As to quaternary structure, component of a CRL2 E3 ubiquitin-protein ligase complex, also named ECS (Elongin BC-CUL2/5-SOCS-box protein) complex, composed of CUL2, Elongin BC (ELOB and ELOC), RBX1 and substrate-specific adapter KLHDC10. Interacts (via the 6 Kelch repeats) with PPP5C.

It is found in the nucleus. Its subcellular location is the cytoplasm. The protein operates within protein modification; protein ubiquitination. Functionally, substrate-recognition component of a Cul2-RING (CRL2) E3 ubiquitin-protein ligase complex of the DesCEND (destruction via C-end degrons) pathway, which recognizes a C-degron located at the extreme C-terminus of target proteins, leading to their ubiquitination and degradation. The C-degron recognized by the DesCEND pathway is usually a motif of less than ten residues and can be present in full-length proteins, truncated proteins or proteolytically cleaved forms. The CRL2(KLHDC10) complex specifically recognizes proteins with a proline-glycine (Pro-Gly) or an alanine tail (CAT tail) at the C-terminus, leading to their ubiquitination and degradation. The CRL2(KLHDC10) complex is involved in the ribosome-associated quality control (RQC) pathway, which mediates the extraction of incompletely synthesized nascent chains from stalled ribosomes: CRL2(KLHDC10) acts downstream of NEMF and recognizes CAT tails associated with stalled nascent chains, leading to their ubiquitination and degradation. Participates in the oxidative stress-induced cell death through MAP3K5 activation. Inhibits PPP5C phosphatase activity on MAP3K5. Acts as a regulator of necroptosis. This chain is Kelch domain-containing protein 10 (KLHDC10), found in Bos taurus (Bovine).